A 264-amino-acid polypeptide reads, in one-letter code: MEAFLGSRSGLWAGGPAPGQFYRIPSTPDSFMDPASALYRGPITRTQNPMVTGTSVLGVKFEGGVVIAADMLGSYGSLARFRNISRIMRVNNSTMLGASGDYADFQYLKQVLGQMVIDEELLGDGHSYSPRAIHSWLTRAMYSRRSKMNPLWNTMVIGGYADGESFLGYVDMLGVAYEAPSLATGYGAYLAQPLLREVLEKQPVLSQTEARDLVERCMRVLYYRDARSYNRFQIATVTEKGVEIEGPLSTETNWDIAHMISGFE.

N-acetylmethionine is present on Met1. Residues Met1–Arg45 constitute a propeptide that is removed on maturation. Ser26 is modified (phosphoserine). Residue Tyr102 is modified to Phosphotyrosine.

This sequence belongs to the peptidase T1B family. In terms of assembly, the 26S proteasome consists of a 20S proteasome core and two 19S regulatory subunits. The 20S proteasome core is a barrel-shaped complex made of 28 subunits that are arranged in four stacked rings. The two outer rings are each formed by seven alpha subunits, and the two inner rings are formed by seven beta subunits. The proteolytic activity is exerted by three beta-subunits PSMB5, PSMB6 and PSMB7. Forms a ternary complex with SMAD1 and OAZ1 before PSMB4 is incorporated into the 20S proteasome. Interacts with PRPF19. As to quaternary structure, (Microbial infection) Interacts with HTLV-1 Tax protein. (Microbial infection) Interacts with HIV-1 Nef and Tat proteins.

It is found in the cytoplasm. The protein localises to the nucleus. Its function is as follows. Non-catalytic component of the 20S core proteasome complex involved in the proteolytic degradation of most intracellular proteins. This complex plays numerous essential roles within the cell by associating with different regulatory particles. Associated with two 19S regulatory particles, forms the 26S proteasome and thus participates in the ATP-dependent degradation of ubiquitinated proteins. The 26S proteasome plays a key role in the maintenance of protein homeostasis by removing misfolded or damaged proteins that could impair cellular functions, and by removing proteins whose functions are no longer required. Associated with the PA200 or PA28, the 20S proteasome mediates ubiquitin-independent protein degradation. This type of proteolysis is required in several pathways including spermatogenesis (20S-PA200 complex) or generation of a subset of MHC class I-presented antigenic peptides (20S-PA28 complex). SMAD1/OAZ1/PSMB4 complex mediates the degradation of the CREBBP/EP300 repressor SNIP1. The protein is Proteasome subunit beta type-4 of Homo sapiens (Human).